The chain runs to 261 residues: Imidazole glycerol phosphate synthase subunit HisF (261 aa).

Catalysis depends on residues Asp16 and Asp135.

Belongs to the HisA/HisF family. Heterodimer of HisH and HisF.

The protein resides in the cytoplasm. It carries out the reaction 5-[(5-phospho-1-deoxy-D-ribulos-1-ylimino)methylamino]-1-(5-phospho-beta-D-ribosyl)imidazole-4-carboxamide + L-glutamine = D-erythro-1-(imidazol-4-yl)glycerol 3-phosphate + 5-amino-1-(5-phospho-beta-D-ribosyl)imidazole-4-carboxamide + L-glutamate + H(+). Its pathway is amino-acid biosynthesis; L-histidine biosynthesis; L-histidine from 5-phospho-alpha-D-ribose 1-diphosphate: step 5/9. Functionally, IGPS catalyzes the conversion of PRFAR and glutamine to IGP, AICAR and glutamate. The HisF subunit catalyzes the cyclization activity that produces IGP and AICAR from PRFAR using the ammonia provided by the HisH subunit. The sequence is that of Imidazole glycerol phosphate synthase subunit HisF from Mycobacterium sp. (strain JLS).